Reading from the N-terminus, the 387-residue chain is Exodeoxyribonuclease 7 large subunit (387 aa).

This sequence belongs to the XseA family. Heterooligomer composed of large and small subunits.

The protein resides in the cytoplasm. It catalyses the reaction Exonucleolytic cleavage in either 5'- to 3'- or 3'- to 5'-direction to yield nucleoside 5'-phosphates.. Functionally, bidirectionally degrades single-stranded DNA into large acid-insoluble oligonucleotides, which are then degraded further into small acid-soluble oligonucleotides. The chain is Exodeoxyribonuclease 7 large subunit from Campylobacter fetus subsp. fetus (strain 82-40).